Consider the following 204-residue polypeptide: Thymidylate kinase (204 aa).

Position 13-20 (13-20 (GIDGSGKS)) interacts with ATP.

Belongs to the thymidylate kinase family.

The enzyme catalyses dTMP + ATP = dTDP + ADP. Phosphorylation of dTMP to form dTDP in both de novo and salvage pathways of dTTP synthesis. This is Thymidylate kinase from Leptospira interrogans serogroup Icterohaemorrhagiae serovar copenhageni (strain Fiocruz L1-130).